Reading from the N-terminus, the 276-residue chain is Putative pyruvate, phosphate dikinase regulatory protein 1 (276 aa).

157-164 (GVSRTSKT) is an ADP binding site.

It belongs to the pyruvate, phosphate/water dikinase regulatory protein family. PDRP subfamily.

It catalyses the reaction N(tele)-phospho-L-histidyl/L-threonyl-[pyruvate, phosphate dikinase] + ADP = N(tele)-phospho-L-histidyl/O-phospho-L-threonyl-[pyruvate, phosphate dikinase] + AMP + H(+). It carries out the reaction N(tele)-phospho-L-histidyl/O-phospho-L-threonyl-[pyruvate, phosphate dikinase] + phosphate + H(+) = N(tele)-phospho-L-histidyl/L-threonyl-[pyruvate, phosphate dikinase] + diphosphate. Functionally, bifunctional serine/threonine kinase and phosphorylase involved in the regulation of the pyruvate, phosphate dikinase (PPDK) by catalyzing its phosphorylation/dephosphorylation. In Staphylococcus haemolyticus (strain JCSC1435), this protein is Putative pyruvate, phosphate dikinase regulatory protein 1.